Consider the following 490-residue polypeptide: Cytochrome P450 2C25 (490 aa).

Cys-435 contributes to the heme binding site.

The protein belongs to the cytochrome P450 family. Requires heme as cofactor.

Its subcellular location is the endoplasmic reticulum membrane. The protein resides in the microsome membrane. The catalysed reaction is an organic molecule + reduced [NADPH--hemoprotein reductase] + O2 = an alcohol + oxidized [NADPH--hemoprotein reductase] + H2O + H(+). Functionally, catalyzes the hydroxylation of tolbutamide and the N-demethylation of aminopyrine and benzphetamine. Also has testosterone hydroxylase (16 beta) activity. This is Cytochrome P450 2C25 (CYP2C25) from Mesocricetus auratus (Golden hamster).